Here is a 250-residue protein sequence, read N- to C-terminus: Ribonuclease PH (250 aa).

Phosphate is bound by residues R99 and 137-139; that span reads GTR.

This sequence belongs to the RNase PH family. In terms of assembly, homohexameric ring arranged as a trimer of dimers.

It catalyses the reaction tRNA(n+1) + phosphate = tRNA(n) + a ribonucleoside 5'-diphosphate. Its function is as follows. Phosphorolytic 3'-5' exoribonuclease that plays an important role in tRNA 3'-end maturation. Removes nucleotide residues following the 3'-CCA terminus of tRNAs; can also add nucleotides to the ends of RNA molecules by using nucleoside diphosphates as substrates, but this may not be physiologically important. Probably plays a role in initiation of 16S rRNA degradation (leading to ribosome degradation) during starvation. This chain is Ribonuclease PH, found in Bordetella parapertussis (strain 12822 / ATCC BAA-587 / NCTC 13253).